We begin with the raw amino-acid sequence, 275 residues long: MATYFVGDLQGCYDELQLLLERVDFNPTQDKLYLVGDLVARGDKSLECLRFVKSLGNAAQTVLGNHDLHLIATALDIKKVKPRDRVDAIFNAPDFDEQIHWLRHQPLLVHSEELNFLMSHAGISPDWDLKTAKSCAAEVEQILQHGDFHYLIENMYSEQPDRWSPDLQGLARHRYIINAFTRMRFCYLDHRFDFACKSPLKDAPAELTPWFNLDNPLYKQIPIVFGHWASLVDEPTPKGIYALDTGCVWNNRMTMLRWEDKQFFTQSAVKNYSDF.

The protein belongs to the Ap4A hydrolase family.

The enzyme catalyses P(1),P(4)-bis(5'-adenosyl) tetraphosphate + H2O = 2 ADP + 2 H(+). Its function is as follows. Hydrolyzes diadenosine 5',5'''-P1,P4-tetraphosphate to yield ADP. This Haemophilus influenzae (strain PittEE) protein is Bis(5'-nucleosyl)-tetraphosphatase, symmetrical.